The primary structure comprises 360 residues: G-box-binding factor 2 (360 aa).

The span at 1–16 (MGSNEEGNPTNNSDKP) shows a compositional bias: polar residues. 2 disordered regions span residues 1 to 26 (MGSN…EQSN) and 150 to 275 (KVGS…AETE). Residues 164–184 (SQSSENDGSSNGSDGNTTGGE) are compositionally biased toward low complexity. Over residues 198–208 (TGERPSSQNSL) the composition is skewed to polar residues. Residues 246–264 (NEKEVKREKRKQSNRESAR) are compositionally biased toward basic and acidic residues. The 64-residue stretch at 249–312 (EVKREKRKQS…EKLRLENEAI (64 aa)) folds into the bZIP domain. The tract at residues 251-270 (KREKRKQSNRESARRSRLRK) is basic motif. The tract at residues 277 to 312 (LSVKVDALVAENMSLRSKLGQLNNESEKLRLENEAI) is leucine-zipper. Residues 335–352 (NSVSGSKTVQHQLLNASP) are compositionally biased toward polar residues. Positions 335–360 (NSVSGSKTVQHQLLNASPITDPVAAS) are disordered.

It belongs to the bZIP family. DNA-binding heterodimer. Interacts with GBF4. Interacts with BZIP16 and BZIP68. Found in both light and dark grown leaves.

The protein localises to the nucleus. In terms of biological role, binds to the G-box motif (5'-CCACGTGG-3') of the rbcS-1A gene promoter. G-box and G-box-like motifs are cis-acting elements defined in promoters of certain plant genes which are regulated by such diverse stimuli as light-induction or hormone control. GBF2 is found to bind asymmetrically to the G-box. This chain is G-box-binding factor 2 (GBF2), found in Arabidopsis thaliana (Mouse-ear cress).